We begin with the raw amino-acid sequence, 239 residues long: 2,3,4,5-tetrahydropyridine-2,6-dicarboxylate N-acetyltransferase (239 aa).

The protein belongs to the transferase hexapeptide repeat family. DapH subfamily.

The catalysed reaction is (S)-2,3,4,5-tetrahydrodipicolinate + acetyl-CoA + H2O = L-2-acetamido-6-oxoheptanedioate + CoA. It functions in the pathway amino-acid biosynthesis; L-lysine biosynthesis via DAP pathway; LL-2,6-diaminopimelate from (S)-tetrahydrodipicolinate (acetylase route): step 1/3. Its function is as follows. Catalyzes the transfer of an acetyl group from acetyl-CoA to tetrahydrodipicolinate. The polypeptide is 2,3,4,5-tetrahydropyridine-2,6-dicarboxylate N-acetyltransferase (Staphylococcus aureus (strain bovine RF122 / ET3-1)).